Here is a 431-residue protein sequence, read N- to C-terminus: Enolase (431 aa).

Gln-163 is a (2R)-2-phosphoglycerate binding site. Glu-205 acts as the Proton donor in catalysis. Mg(2+) contacts are provided by Asp-242, Glu-288, and Asp-315. Residues Lys-340, Arg-369, Ser-370, and Lys-391 each coordinate (2R)-2-phosphoglycerate. Lys-340 serves as the catalytic Proton acceptor.

The protein belongs to the enolase family. The cofactor is Mg(2+).

Its subcellular location is the cytoplasm. It localises to the secreted. It is found in the cell surface. It catalyses the reaction (2R)-2-phosphoglycerate = phosphoenolpyruvate + H2O. The protein operates within carbohydrate degradation; glycolysis; pyruvate from D-glyceraldehyde 3-phosphate: step 4/5. Its function is as follows. Catalyzes the reversible conversion of 2-phosphoglycerate (2-PG) into phosphoenolpyruvate (PEP). It is essential for the degradation of carbohydrates via glycolysis. This chain is Enolase, found in Latilactobacillus sakei subsp. sakei (strain 23K) (Lactobacillus sakei subsp. sakei).